The chain runs to 310 residues: Thioredoxin reductase (310 aa).

FAD is bound at residue 34 to 41 (NGMQPGGQ). Residues cysteine 135 and cysteine 138 are joined by a disulfide bond. 281-290 (DVQDKIYRQA) contacts FAD.

This sequence belongs to the class-II pyridine nucleotide-disulfide oxidoreductase family. As to quaternary structure, homodimer. The cofactor is FAD.

The protein resides in the cytoplasm. It catalyses the reaction [thioredoxin]-dithiol + NADP(+) = [thioredoxin]-disulfide + NADPH + H(+). The polypeptide is Thioredoxin reductase (trxB) (Rickettsia conorii (strain ATCC VR-613 / Malish 7)).